The primary structure comprises 351 residues: Rhodopsin (351 aa).

Residues 1–36 are Extracellular-facing; sequence MNGTEGPFFYIPMVNTTGIVRSPYEYPQYYLVNPAA. N-linked (GlcNAc...) asparagine glycosylation is found at N2 and N15. Residues 37–61 form a helical membrane-spanning segment; the sequence is YAILGAYMFFLIIVGFPVNFMTLYV. Residues 62–73 are Cytoplasmic-facing; it reads TLEHKKLRTPLN. The chain crosses the membrane as a helical span at residues 74–96; the sequence is YILLNLAVADLFMVIGGFTTTMY. The Extracellular portion of the chain corresponds to 97-110; the sequence is TSMHGYFVLGRLGC. C110 and C187 are disulfide-bonded. Residues 111–133 traverse the membrane as a helical segment; the sequence is NLEGFFATLGGMISLWSLAVLAI. A 'Ionic lock' involved in activated form stabilization motif is present at residues 134–136; sequence ERW. Topologically, residues 134–152 are cytoplasmic; it reads ERWVVVCKPISNFRFGENH. Residues 153-173 traverse the membrane as a helical segment; sequence AIMGVSLTWGMALACTVPPLV. Residues 174 to 202 lie on the Extracellular side of the membrane; it reads GWSRYIPEGMQCSCGIDYYTRAEGFNNES. The N-linked (GlcNAc...) asparagine glycan is linked to N200. A helical transmembrane segment spans residues 203–224; sequence FVLYMFFCHFTIPLTIIFFCYG. Residues 225–252 are Cytoplasmic-facing; that stretch reads RLLCAVKEAAAAQQESETTQRAEREVTR. A helical transmembrane segment spans residues 253-274; the sequence is MVIIMVIGFLVCWLPYASVAWF. The Extracellular segment spans residues 275 to 286; it reads IFTHQGSEFGPL. A helical membrane pass occupies residues 287–308; that stretch reads FMTIPAFFAKSSSIYNPMIYIC. K296 bears the N6-(retinylidene)lysine mark. At 309 to 351 the chain is on the cytoplasmic side; sequence MNKQFRHCMITTLFCGKNPFEGEEEGASSTKTEASSASSVSPA. C323 is lipidated: S-palmitoyl cysteine. A disordered region spans residues 330 to 351; sequence GEEEGASSTKTEASSASSVSPA. The span at 335 to 351 shows a compositional bias: low complexity; sequence ASSTKTEASSASSVSPA.

It belongs to the G-protein coupled receptor 1 family. Opsin subfamily. Post-translationally, phosphorylated on some or all of the serine and threonine residues present in the C-terminal region. Contains one covalently linked retinal chromophore.

Its subcellular location is the membrane. It is found in the cell projection. It localises to the cilium. The protein resides in the photoreceptor outer segment. In terms of biological role, photoreceptor required for image-forming vision at low light intensity. While most salt water fish species use retinal as chromophore, most freshwater fish use 3-dehydroretinal, or a mixture of retinal and 3-dehydroretinal. Light-induced isomerization of 11-cis to all-trans retinal triggers a conformational change that activates signaling via G-proteins. Subsequent receptor phosphorylation mediates displacement of the bound G-protein alpha subunit by arrestin and terminates signaling. This chain is Rhodopsin (rho), found in Sargocentron diadema (Crown squirrelfish).